The following is a 436-amino-acid chain: MRQALPLVTRQGDRIAIVSGLRTPFARQATAFHGIPAVDLGKMVVGELLARSEIPADAIEQLVFGQVVQMPEAPNIAREIVLGTGMNVHTDAYSVSRACATSFQAVANVAESLMAGTIRAGIAGGADSSSVLPIGVSKALARVLVDGNKARTTRQRLTLFSRLRLRDLLPVPPAVAEYSTGLRMGDTAEQMAKTYGITREQQDALAHRSHQRAAQAWAEGKLAEEVMTTYVPPYKNPFAEDNNIRGASTLADYAKLRPAFDRKHGSVTAANSTPLTDGAAAVIMMTESRAKELGLRPLGYLRSYAFTAIDVWQDMLLGPAWSTPLALERAGLTMADLTLFDMHEAFAAQTLANLQLLGSERFAREVLGRAQATGEVDDAKFNVLGGSIAYGHPFAATGARMITQTLHELRRRGGGFGLVTACAAGGLGAAMVLEAE.

Cys99 serves as the catalytic Acyl-thioester intermediate. Active-site proton acceptor residues include His392 and Cys422.

This sequence belongs to the thiolase-like superfamily. Thiolase family. Heterotetramer of two alpha chains (FadJ) and two beta chains (FadI).

It localises to the cytoplasm. It catalyses the reaction an acyl-CoA + acetyl-CoA = a 3-oxoacyl-CoA + CoA. Its pathway is lipid metabolism; fatty acid beta-oxidation. Functionally, catalyzes the final step of fatty acid oxidation in which acetyl-CoA is released and the CoA ester of a fatty acid two carbons shorter is formed. This is 3-ketoacyl-CoA thiolase from Salmonella paratyphi B (strain ATCC BAA-1250 / SPB7).